A 247-amino-acid chain; its full sequence is ATP synthase subunit C lysine N-methyltransferase (247 aa).

The residue at position 1 (Met-1) is an N-acetylmethionine. Over residues 1-12 the composition is skewed to basic and acidic residues; the sequence is MERVGTPEEERQ. The tract at residues 1-25 is disordered; sequence MERVGTPEEERQAGPVLPTSLESDS. Residues 34–54 form a helical membrane-spanning segment; that stretch reads LITGVVGGALLTVYAVATPFI. The interval 51–85 is required for mitochondrial location; that stretch reads TPFITPALRKVCLPFVPATSKQVENVVRMLRHRRG. The disordered stretch occupies residues 209–247; that stretch reads QRGRGGRPNQEWVGQKNLSETAGLQASSSETRSKLLDVE. Polar residues predominate over residues 224–238; sequence KNLSETAGLQASSSE.

This sequence belongs to the ANT/ATPSC lysine N-methyltransferase family. Ubiquitously expressed.

Its subcellular location is the mitochondrion membrane. It carries out the reaction L-lysyl-[protein] + 3 S-adenosyl-L-methionine = N(6),N(6),N(6)-trimethyl-L-lysyl-[protein] + 3 S-adenosyl-L-homocysteine + 3 H(+). Its function is as follows. Mitochondrial protein-lysine N-methyltransferase that trimethylates ATP synthase subunit C, ATP5MC1 and ATP5MC2. Trimethylation is required for proper incorporation of the C subunit into the ATP synthase complex and mitochondrial respiration. Promotes chronic pain. Involved in persistent inflammatory and neuropathic pain: methyltransferase activity in the mitochondria of sensory neurons promotes chronic pain via a pathway that depends on the production of reactive oxygen species (ROS) and on the engagement of spinal cord microglia. The polypeptide is ATP synthase subunit C lysine N-methyltransferase (Mus musculus (Mouse)).